The primary structure comprises 131 residues: Peptide methionine sulfoxide reductase MsrB (131 aa).

The region spanning 8–130 is the MsrB domain; it reads LDEWRSMLDP…NSVCIDLRPR (123 aa). Positions 47, 50, 96, and 99 each coordinate Zn(2+). C119 functions as the Nucleophile in the catalytic mechanism.

It belongs to the MsrB Met sulfoxide reductase family. Zn(2+) is required as a cofactor.

The enzyme catalyses L-methionyl-[protein] + [thioredoxin]-disulfide + H2O = L-methionyl-(R)-S-oxide-[protein] + [thioredoxin]-dithiol. The sequence is that of Peptide methionine sulfoxide reductase MsrB from Pseudomonas putida (strain ATCC 700007 / DSM 6899 / JCM 31910 / BCRC 17059 / LMG 24140 / F1).